The primary structure comprises 236 residues: MNSLSYLNHELEQFPSPEFALTDPNGLLAVGGDLQPKRLLNAYYEGIFPWFNIDDPILWWSPDPRAVFVPGNMKTSRSLLKHLKKQPWRYSINHAFSQVIEGCAAPRSSQDGTWITPEIQDAYLKLHELGKAHSIEVWHQDELIGGLYGLATGQVFCGESMFHTQTNASKAAMLLLHQHLLKQGFKLIDAQVMNPHLASLGATALRRKDFINLLKRFRDLPVAADAWARSEVSLEL.

It belongs to the L/F-transferase family.

The protein localises to the cytoplasm. The enzyme catalyses N-terminal L-lysyl-[protein] + L-leucyl-tRNA(Leu) = N-terminal L-leucyl-L-lysyl-[protein] + tRNA(Leu) + H(+). It carries out the reaction N-terminal L-arginyl-[protein] + L-leucyl-tRNA(Leu) = N-terminal L-leucyl-L-arginyl-[protein] + tRNA(Leu) + H(+). The catalysed reaction is L-phenylalanyl-tRNA(Phe) + an N-terminal L-alpha-aminoacyl-[protein] = an N-terminal L-phenylalanyl-L-alpha-aminoacyl-[protein] + tRNA(Phe). Functions in the N-end rule pathway of protein degradation where it conjugates Leu, Phe and, less efficiently, Met from aminoacyl-tRNAs to the N-termini of proteins containing an N-terminal arginine or lysine. This is Leucyl/phenylalanyl-tRNA--protein transferase from Shewanella woodyi (strain ATCC 51908 / MS32).